The chain runs to 333 residues: Gamma-D-glutamyl-L-lysine dipeptidyl-peptidase (333 aa).

Positions 1–23 (MKKVGTAFLTTLFIFSSFTSAHA) are cleaved as a signal peptide. Substrate is bound by residues Glu83, Tyr118, 237-239 (DCS), and 256-257 (DS). Residues 208–332 (TPAADDLINT…EEYAGARRYL (125 aa)) enclose the NlpC/P60 domain. Residue Cys238 is the Nucleophile of the active site. His291 functions as the Proton acceptor in the catalytic mechanism. Residue His303 is part of the active site.

Belongs to the peptidase C40 family. In terms of assembly, monomer in solution.

The catalysed reaction is The enzyme releases L-Ala-gamma-D-Glu dipeptides from cell wall peptides via cleavage of an L-Ala-gamma-D-Glu-|-L-Lys bond.. Its pathway is cell wall degradation; peptidoglycan degradation. In terms of biological role, specifically hydrolyzes gamma-D-glutamyl-L-lysine bonds in murein peptides, releasing L-Ala-D-Glu. In Bacillus cereus (strain ATCC 10987 / NRS 248), this protein is Gamma-D-glutamyl-L-lysine dipeptidyl-peptidase.